The following is a 201-amino-acid chain: MTPEAFAADVPVSRETVERLEAYLAVLEKWQRRINLVGKTTLDDPWRRHFLDSAQLLALLPTPTRVLLDLGSGAGFPGLVLAILGVPEVHLVEADGRKSAFLIEAARITNTRIVLHTLRLEALPVFPVDVVTARAFAPLARILEGAAPFLLAGAQGVFLKGQSVDDELTEAQSQWTMSVERFASRSDPTGHILRIGEIHRA.

S-adenosyl-L-methionine is bound by residues Gly71, Phe76, 120-121, and Arg134; that span reads LE.

It belongs to the methyltransferase superfamily. RNA methyltransferase RsmG family.

It is found in the cytoplasm. The enzyme catalyses guanosine(527) in 16S rRNA + S-adenosyl-L-methionine = N(7)-methylguanosine(527) in 16S rRNA + S-adenosyl-L-homocysteine. Its function is as follows. Specifically methylates the N7 position of guanine in position 527 of 16S rRNA. In Rhodospirillum rubrum (strain ATCC 11170 / ATH 1.1.1 / DSM 467 / LMG 4362 / NCIMB 8255 / S1), this protein is Ribosomal RNA small subunit methyltransferase G.